The primary structure comprises 285 residues: MPTLTPPAGSEVIPFASVHTERVEDCLVFPSELSTKVRLGGLVTAVSGGILGAALLSQTSSQGVAVPALLMGLSFVGGLLSTWSPCGYSSLCLLRPVGPYSARSLVKYTPTFLLHGIGYAVGALILGCVLGIAGGLLGFGGVSFGALAGLGAAGIIYGAHQLGFLRVPYPQRRAQVPHDARQRFPVWFIGGLYGLSLGLNYLTYVQTPILYLVTAAAVLSSNIGAAILLFAAFNAGRFLPMAVNYLPVSDITVQNWLARRQEGAALLDGVLLVAGGAALLTFAAL.

7 consecutive transmembrane segments (helical) span residues 39–59 (LGGLVTAVSGGILGAALLSQT), 63–83 (GVAVPALLMGLSFVGGLLSTW), 120–140 (AVGALILGCVLGIAGGLLGFG), 144–164 (FGALAGLGAAGIIYGAHQLGF), 184–204 (FPVWFIGGLYGLSLGLNYLTY), 209–229 (ILYLVTAAAVLSSNIGAAILL), and 265–285 (ALLDGVLLVAGGAALLTFAAL).

The protein localises to the cell membrane. It functions in the pathway one-carbon metabolism; methylamine degradation. This Methylorubrum extorquens (strain ATCC 14718 / DSM 1338 / JCM 2805 / NCIMB 9133 / AM1) (Methylobacterium extorquens) protein is Methylamine utilization protein MauF (mauF).